We begin with the raw amino-acid sequence, 300 residues long: Acetylglutamate kinase (300 aa).

Residues G68 to G69, R90, and N195 each bind substrate.

This sequence belongs to the acetylglutamate kinase family. ArgB subfamily.

It is found in the cytoplasm. The enzyme catalyses N-acetyl-L-glutamate + ATP = N-acetyl-L-glutamyl 5-phosphate + ADP. It participates in amino-acid biosynthesis; L-arginine biosynthesis; N(2)-acetyl-L-ornithine from L-glutamate: step 2/4. Its function is as follows. Catalyzes the ATP-dependent phosphorylation of N-acetyl-L-glutamate. In Stutzerimonas stutzeri (strain A1501) (Pseudomonas stutzeri), this protein is Acetylglutamate kinase.